The sequence spans 812 residues: Protein FAM83G (812 aa).

Alanine 2 is modified (N-acetylalanine). A DUF1669 region spans residues 2–312 (AFSQVQCLDD…LYLMSQSVSL (311 aa)). Residue serine 4 is modified to Phosphoserine. Residues 76–119 (PGSEDPRVSGRRPEPQDNGGADASEETSAAGGPPATETLPSLEY) form a disordered region. The segment covering 79-90 (EDPRVSGRRPEP) has biased composition (basic and acidic residues). Phosphoserine occurs at positions 124, 127, and 356. 3 disordered regions span residues 362-389 (KSSS…GDLS), 455-509 (ASAQ…KPRT), and 521-812 (SDIG…HKEP). Polar residues predominate over residues 455–467 (ASAQHQLWKQSQG). Over residues 471–480 (CPAPCPPPAP) the composition is skewed to pro residues. Positions 545 to 562 (STASESEVPQQQHSSMTQ) are enriched in polar residues. Positions 576–586 (LDEDEDDDDDY) are enriched in acidic residues. Residues 589-598 (LSDQDSLSGS) are compositionally biased toward low complexity. Phosphoserine is present on residues serine 609, serine 613, serine 615, and serine 649. Positions 721-731 (SSSKKASPAAA) are enriched in low complexity. Residues 761–772 (LRAELRATEEHA) are compositionally biased toward basic and acidic residues.

Belongs to the FAM83 family. In terms of assembly, interacts with SMAD1 (via MH2 domain); in a SMAD4-independent manner. Directly interacts (via DUF1669) with casein kinase isoforms CSNK1A1 and CSNK1A1L. Post-translationally, BMP signaling induces the phosphorylation by BMPR1A at Ser-609, Ser-613 and Ser-615. Phosphorylation at Ser-609 is necessary for the activation of SMAD4-independent BMP target genes such as NEDD9 and ASNS. Phosphorylated by CSNK1A1.

It localises to the cytoplasm. Its subcellular location is the cytosol. It is found in the nucleus. Functionally, substrate for type I BMP receptor kinase involved in regulation of some target genes of the BMP signaling pathway. Also regulates the expression of several non-BMP target genes, suggesting a role in other signaling pathways. In Mus musculus (Mouse), this protein is Protein FAM83G (Fam83g).